The following is a 238-amino-acid chain: Purine nucleoside phosphorylase DeoD-type (238 aa).

Residue His-5 coordinates a purine D-ribonucleoside. Residues Gly-21, Arg-25, Arg-44, and 88–91 (RVGS) contribute to the phosphate site. Residues 180 to 182 (EME) and 204 to 205 (SD) contribute to the a purine D-ribonucleoside site. Asp-205 serves as the catalytic Proton donor.

Belongs to the PNP/UDP phosphorylase family. As to quaternary structure, homohexamer; trimer of homodimers.

The enzyme catalyses a purine D-ribonucleoside + phosphate = a purine nucleobase + alpha-D-ribose 1-phosphate. The catalysed reaction is a purine 2'-deoxy-D-ribonucleoside + phosphate = a purine nucleobase + 2-deoxy-alpha-D-ribose 1-phosphate. Its function is as follows. Catalyzes the reversible phosphorolytic breakdown of the N-glycosidic bond in the beta-(deoxy)ribonucleoside molecules, with the formation of the corresponding free purine bases and pentose-1-phosphate. This chain is Purine nucleoside phosphorylase DeoD-type, found in Proteus mirabilis (strain HI4320).